We begin with the raw amino-acid sequence, 303 residues long: Glycine--tRNA ligase alpha subunit (303 aa).

Belongs to the class-II aminoacyl-tRNA synthetase family. Tetramer of two alpha and two beta subunits.

It is found in the cytoplasm. The enzyme catalyses tRNA(Gly) + glycine + ATP = glycyl-tRNA(Gly) + AMP + diphosphate. This Escherichia coli (strain K12) protein is Glycine--tRNA ligase alpha subunit (glyQ).